Consider the following 701-residue polypeptide: Elongation factor G (701 aa).

One can recognise a tr-type G domain in the interval 8–290; sequence SRYRNIGISA…AVIEYLPAPT (283 aa). Residues 17-24, 88-92, and 142-145 each bind GTP; these read AHIDAGKT, DTPGH, and NKMD.

The protein belongs to the TRAFAC class translation factor GTPase superfamily. Classic translation factor GTPase family. EF-G/EF-2 subfamily.

It localises to the cytoplasm. Catalyzes the GTP-dependent ribosomal translocation step during translation elongation. During this step, the ribosome changes from the pre-translocational (PRE) to the post-translocational (POST) state as the newly formed A-site-bound peptidyl-tRNA and P-site-bound deacylated tRNA move to the P and E sites, respectively. Catalyzes the coordinated movement of the two tRNA molecules, the mRNA and conformational changes in the ribosome. In Actinobacillus pleuropneumoniae serotype 5b (strain L20), this protein is Elongation factor G.